A 94-amino-acid chain; its full sequence is Small ribosomal subunit protein uS19 (94 aa).

This sequence belongs to the universal ribosomal protein uS19 family.

In terms of biological role, protein S19 forms a complex with S13 that binds strongly to the 16S ribosomal RNA. The protein is Small ribosomal subunit protein uS19 of Nitrosomonas eutropha (strain DSM 101675 / C91 / Nm57).